The sequence spans 417 residues: Serine--tRNA ligase (417 aa).

225-227 (TLE) contributes to the L-serine binding site. Residue 256–258 (RQE) coordinates ATP. Glu279 lines the L-serine pocket. 343–346 (EVSS) serves as a coordination point for ATP. Thr379 provides a ligand contact to L-serine.

This sequence belongs to the class-II aminoacyl-tRNA synthetase family. Type-1 seryl-tRNA synthetase subfamily. Homodimer. The tRNA molecule binds across the dimer.

It localises to the cytoplasm. It catalyses the reaction tRNA(Ser) + L-serine + ATP = L-seryl-tRNA(Ser) + AMP + diphosphate + H(+). The enzyme catalyses tRNA(Sec) + L-serine + ATP = L-seryl-tRNA(Sec) + AMP + diphosphate + H(+). It participates in aminoacyl-tRNA biosynthesis; selenocysteinyl-tRNA(Sec) biosynthesis; L-seryl-tRNA(Sec) from L-serine and tRNA(Sec): step 1/1. Its function is as follows. Catalyzes the attachment of serine to tRNA(Ser). Is also able to aminoacylate tRNA(Sec) with serine, to form the misacylated tRNA L-seryl-tRNA(Sec), which will be further converted into selenocysteinyl-tRNA(Sec). In Mycoplasma genitalium (strain ATCC 33530 / DSM 19775 / NCTC 10195 / G37) (Mycoplasmoides genitalium), this protein is Serine--tRNA ligase.